The chain runs to 90 residues: Probable Fe(2+)-trafficking protein (90 aa).

Belongs to the Fe(2+)-trafficking protein family.

Could be a mediator in iron transactions between iron acquisition and iron-requiring processes, such as synthesis and/or repair of Fe-S clusters in biosynthetic enzymes. In Vibrio campbellii (strain ATCC BAA-1116), this protein is Probable Fe(2+)-trafficking protein.